Here is a 175-residue protein sequence, read N- to C-terminus: Protein FMP23, mitochondrial (175 aa).

The transit peptide at 1–38 (MLINHLSKIRTVRHFSNIKPVLSKEVSRRVIVAPASHF) directs the protein to the mitochondrion.

The protein localises to the mitochondrion. Functionally, may be involved in mitochondrial iron or copper homeostatis. This Saccharomyces cerevisiae (strain ATCC 204508 / S288c) (Baker's yeast) protein is Protein FMP23, mitochondrial (FMP23).